The sequence spans 142 residues: E1B protein, small T-antigen (142 aa).

This sequence belongs to the adenoviridae E1B 19 kDa protein family.

The protein resides in the host cell membrane. Its subcellular location is the host nucleus envelope. It localises to the host nucleus lamina. Its function is as follows. Putative adenovirus Bcl-2 homolog that inhibits apoptosis induced by TNF or FAS pathways, as well as p53-mediated apoptosis. Without E1B 19K function, virus production is compromised because of premature death of host cell. Interacts with Bax protein in cell lysates. The protein is E1B protein, small T-antigen of Homo sapiens (Human).